Here is an 89-residue protein sequence, read N- to C-terminus: Protein S100-A6 (89 aa).

EF-hand domains follow at residues 12–47 (LVAI…IGAK) and 48–83 (LQDA…LALI). The Ca(2+) site is built by Thr28 and Glu33. N6-acetyllysine is present on Lys40. Lys47 is subject to N6-acetyllysine; alternate. The residue at position 47 (Lys47) is an N6-succinyllysine; alternate. 5 residues coordinate Ca(2+): Asp61, Asn63, Asp65, Glu67, and Glu72.

It belongs to the S-100 family. As to quaternary structure, homodimer; head to tail assembly of 2 subunits. Interacts with CACYBP in a calcium-dependent manner. Interacts with ANXA2 and ANXA11 (via N-terminus). Interacts with SUGT1. Interacts with TP53; has higher affinity for TP53 that is phosphorylated on its N-terminal domain, and lower affinity for TP53 that is phosphorylated on its C-terminal domain. Interacts with tropomyosin. Interacts with FKBP4. Interacts with PPP5C (via TPR repeats); the interaction is calcium-dependent and modulates PPP5C activity. Interacts with TPPP; this interaction inhibits TPPP dimerization.

Its subcellular location is the nucleus envelope. The protein resides in the cytoplasm. It localises to the cell membrane. May function as calcium sensor and modulator, contributing to cellular calcium signaling. May function by interacting with other proteins, such as TPR-containing proteins, and indirectly play a role in many physiological processes such as the reorganization of the actin cytoskeleton and in cell motility. Binds 2 calcium ions. Calcium binding is cooperative. In Rattus norvegicus (Rat), this protein is Protein S100-A6 (S100a6).